Here is a 44-residue protein sequence, read N- to C-terminus: Opistoporin-2 (44 aa).

In terms of tissue distribution, expressed by the venom gland.

The protein localises to the secreted. It is found in the target cell membrane. Functionally, at high concentrations, acts as a pore former in cellular membranes and causes the leakage of the cells. At submicromolar concentrations, degranulates granulocytes and has a weak hemolytic activity against human erythrocytes. Also strongly inhibits the production of superoxide anions. Has a strong antibacterial activity against Gram-negative bacteria but is less active against Gram-positive bacteria. Also has antifungal activity. The protein is Opistoporin-2 of Opistophthalmus carinatus (African yellow leg scorpion).